Reading from the N-terminus, the 240-residue chain is UDP-2,3-diacylglucosamine hydrolase (240 aa).

Mn(2+) contacts are provided by Asp-7, His-9, Asp-40, Asn-78, and His-113. Residue Asn-78–Arg-79 participates in substrate binding. Substrate is bound by residues Asp-121, Ser-159, Lys-166, and His-194. Residues His-194 and His-196 each contribute to the Mn(2+) site.

Belongs to the LpxH family. Requires Mn(2+) as cofactor.

It localises to the cell inner membrane. The catalysed reaction is UDP-2-N,3-O-bis[(3R)-3-hydroxytetradecanoyl]-alpha-D-glucosamine + H2O = 2-N,3-O-bis[(3R)-3-hydroxytetradecanoyl]-alpha-D-glucosaminyl 1-phosphate + UMP + 2 H(+). Its pathway is glycolipid biosynthesis; lipid IV(A) biosynthesis; lipid IV(A) from (3R)-3-hydroxytetradecanoyl-[acyl-carrier-protein] and UDP-N-acetyl-alpha-D-glucosamine: step 4/6. Its function is as follows. Hydrolyzes the pyrophosphate bond of UDP-2,3-diacylglucosamine to yield 2,3-diacylglucosamine 1-phosphate (lipid X) and UMP by catalyzing the attack of water at the alpha-P atom. Involved in the biosynthesis of lipid A, a phosphorylated glycolipid that anchors the lipopolysaccharide to the outer membrane of the cell. The polypeptide is UDP-2,3-diacylglucosamine hydrolase (Pseudomonas putida (strain ATCC 700007 / DSM 6899 / JCM 31910 / BCRC 17059 / LMG 24140 / F1)).